The following is a 267-amino-acid chain: ATP synthase subunit a (267 aa).

A run of 5 helical transmembrane segments spans residues 38 to 58 (WHID…FVFY), 98 to 118 (IAPL…MDLI), 145 to 165 (NITF…SIKI), 208 to 228 (LFGN…MPWW), and 238 to 258 (AIFH…LTIV).

It belongs to the ATPase A chain family. In terms of assembly, F-type ATPases have 2 components, CF(1) - the catalytic core - and CF(0) - the membrane proton channel. CF(1) has five subunits: alpha(3), beta(3), gamma(1), delta(1), epsilon(1). CF(0) has three main subunits: a(1), b(2) and c(9-12). The alpha and beta chains form an alternating ring which encloses part of the gamma chain. CF(1) is attached to CF(0) by a central stalk formed by the gamma and epsilon chains, while a peripheral stalk is formed by the delta and b chains.

Its subcellular location is the cell inner membrane. Its function is as follows. Key component of the proton channel; it plays a direct role in the translocation of protons across the membrane. This chain is ATP synthase subunit a, found in Psychromonas ingrahamii (strain DSM 17664 / CCUG 51855 / 37).